A 57-amino-acid chain; its full sequence is Small ribosomal subunit protein eS27 (57 aa).

C10, C13, C29, and C32 together coordinate Zn(2+). A C4-type zinc finger spans residues 10–32 (CGDCENEQVVFGKASSVVSCAVC).

The protein belongs to the eukaryotic ribosomal protein eS27 family. In terms of assembly, part of the 30S ribosomal subunit. Zn(2+) is required as a cofactor.

The sequence is that of Small ribosomal subunit protein eS27 from Halorubrum lacusprofundi (strain ATCC 49239 / DSM 5036 / JCM 8891 / ACAM 34).